We begin with the raw amino-acid sequence, 794 residues long: Protein sel-1 homolog 1 (794 aa).

Residues 1–21 form the signal peptide; that stretch reads MQVHVGLTLLLCAVLLSSATA. The interval 20 to 91 is disordered; sequence TASSDDESNQ…EEEVSVGEEI (72 aa). Residues 22-737 form an interaction with ERLEC1, OS9 and SYVN1 region; sequence SSDDESNQDE…DIFTQLDMDQ (716 aa). At 22 to 738 the chain is on the lumenal side; that stretch reads SSDDESNQDE…IFTQLDMDQL (717 aa). 2 stretches are compositionally biased toward acidic residues: residues 23-32 and 62-77; these read SDDESNQDES and DSEDPEVESPLQEEEE. Ser-63 bears the Phosphoserine mark. Residues 122–170 form the Fibronectin type-II domain; sequence AHGEPCHFPFLFLDKEYDECTSDGRQDGRLWCATTYDYKTDEKWGFCET. 2 cysteine pairs are disulfide-bonded: Cys-127–Cys-153 and Cys-141–Cys-168. Sel1-like repeat units follow at residues 183–218, 219–254, 255–290, 291–326, 373–409, 410–446, 447–482, 483–518, and 519–554; these read AEMIYQAGMKILNGSNRKSQKREAYRYLQKAAGMNH, TKALERVSYALLFGDYLTQNIQAAKEMFEKLTEEGS, PKGQTALGFLYVSGLGVNSSQAKALVYYTFGALGGN, LIAHMVLGYRYWAGIGVLQSCESVLTHYRLVANHVA, VQAQVGLGQLHLHGGRGVEQNHQRAFDYFNLAANAGN, SHAMAFLGKMYSEGSDIVPQSNETALHYFKKAADMGN, PVGQSGLGMAYLYGRGIQVNYDLALKYFQKAAEQGW, VDGQLQLGSMYYNGIGVKRDYKQALKYFNLASQGGH, and ILAFYNLAQMHASGTGVMRSCHTAVELFKNVCERGR. Residues Asn-195 and Asn-217 are each glycosylated (N-linked (GlcNAc...) asparagine). N-linked (GlcNAc...) asparagine glycosylation occurs at Asn-272. Residues 352–537 are important for homodimerization and oligomerization; sequence NSGMLEEDLI…MHASGTGVMR (186 aa). N-linked (GlcNAc...) asparagine glycosylation occurs at Asn-431. N-linked (GlcNAc...) asparagine glycosylation is present at Asn-608. 2 Sel1-like repeats span residues 627–662 and 664–699; these read TVARIKLGDYHFYGFGTDVDYETAFIHYRLASEQQH and AQAMFNLGYMHEKGLGIKQDIHLAKRFYDMAAEASP. Positions 643 to 723 are interaction with SYVN1; that stretch reads TDVDYETAFI…VVYFLQYIRE (81 aa). Residues 738 to 794 form a mediates retention in the endoplasmic reticulum region; that stretch reads LLGPEWDLYLMTIIALLLGTVIAYRQRQHQDVPVPRPPGPWPAPPQQEGPPEQQPPQ. The helical transmembrane segment at 739–759 threads the bilayer; sequence LGPEWDLYLMTIIALLLGTVI. Residues 760–794 lie on the Cytoplasmic side of the membrane; sequence AYRQRQHQDVPVPRPPGPWPAPPQQEGPPEQQPPQ. The interval 768 to 794 is disordered; that stretch reads DVPVPRPPGPWPAPPQQEGPPEQQPPQ. Pro residues predominate over residues 771–794; sequence VPRPPGPWPAPPQQEGPPEQQPPQ.

Belongs to the sel-1 family. In terms of assembly, homodimer and homooligomer. May form a complex with ERLEC1, HSPA5, OS9, and SYVN1. Interacts with FOXRED2 and EDEM1. Interacts with LPL and LMF1; may stabilize the complex formed by LPL and LMF1 and thereby promote the export of LPL dimers. Component of the HRD1 complex, which comprises at least SYNV1/HRD1, DERL1/2, FAM8A1, HERPUD1/HERP, OS9, SEL1L and UBE2J1. SYNV1 assembles with SEL1L and FAM8A1 through its transmembrane domains, but interaction with its cytoplasmic domain is required to confer stability to FAM8A1 and enhance recruitment of HERPUD1. The interaction with SYNV1/HRD1 is direct. In terms of processing, N-glycosylated.

It is found in the endoplasmic reticulum membrane. In terms of biological role, plays a role in the endoplasmic reticulum quality control (ERQC) system also called ER-associated degradation (ERAD) involved in ubiquitin-dependent degradation of misfolded endoplasmic reticulum proteins. Enhances SYVN1 stability. Plays a role in LPL maturation and secretion. Required for normal differentiation of the pancreas epithelium, and for normal exocrine function and survival of pancreatic cells. May play a role in Notch signaling. The sequence is that of Protein sel-1 homolog 1 (Sel1l) from Mesocricetus auratus (Golden hamster).